The following is a 37-amino-acid chain: Cytochrome b6-f complex subunit 5 (37 aa).

A helical transmembrane segment spans residues 5–25 (FLFGIVLGLIPVTLAGLFVTA).

Belongs to the PetG family. In terms of assembly, the 4 large subunits of the cytochrome b6-f complex are cytochrome b6, subunit IV (17 kDa polypeptide, PetD), cytochrome f and the Rieske protein, while the 4 small subunits are PetG, PetL, PetM and PetN. The complex functions as a dimer.

It is found in the plastid. It localises to the chloroplast thylakoid membrane. Component of the cytochrome b6-f complex, which mediates electron transfer between photosystem II (PSII) and photosystem I (PSI), cyclic electron flow around PSI, and state transitions. PetG is required for either the stability or assembly of the cytochrome b6-f complex. This chain is Cytochrome b6-f complex subunit 5, found in Daucus carota (Wild carrot).